A 531-amino-acid polypeptide reads, in one-letter code: SWI/SNF-related matrix-associated actin-dependent regulator of chromatin subfamily D member 2 (531 aa).

A disordered region spans residues 20 to 85 (AVAAALGAPP…MSPGSRMPMA (66 aa)). A compositionally biased stretch (low complexity) spans 34-45 (PGMLPSPALRGP). Arginine 81 and arginine 104 each carry asymmetric dimethylarginine. Serine 203 bears the Phosphoserine mark. Positions 205 to 226 (SKADGDNAGTAGTPGGTPAADK) are disordered. Over residues 210-225 (DNAGTAGTPGGTPAAD) the composition is skewed to low complexity. Position 217 is a phosphothreonine (threonine 217). Residue lysine 226 forms a Glycyl lysine isopeptide (Lys-Gly) (interchain with G-Cter in SUMO2) linkage. Residues 306-383 (HQPPQYKLDP…PMKLAGLLQH (78 aa)) form the SWIB/MDM2 domain.

It belongs to the SMARCD family. Component of the multiprotein chromatin-remodeling complexes SWI/SNF: SWI/SNF-A (BAF), SWI/SNF-B (PBAF) and related complexes. The canonical complex contains a catalytic subunit (either SMARCA4/BRG1/BAF190A or SMARCA2/BRM/BAF190B), and at least SMARCE1, ACTL6A/BAF53, SMARCC1/BAF155, SMARCC2/BAF170, and SMARCB1/SNF5/BAF47. Other subunits specific to each of the complexes may also be present permitting several possible combinations developmentally and tissue specific. Component of the BAF complex, which includes at least actin (ACTB), ARID1A/BAF250A, ARID1B/BAF250B, SMARCA2/BRM, SMARCA4/BRG1, ACTL6A/BAF53, ACTL6B/BAF53B, SMARCE1/BAF57, SMARCC1/BAF155, SMARCC2/BAF170, SMARCB1/SNF5/INI1, and one or more SMARCD1/BAF60A, SMARCD2/BAF60B, or SMARCD3/BAF60C. In muscle cells, the BAF complex also contains DPF3. Component of the SWI/SNF-B (PBAF) chromatin remodeling complex, at least composed of SMARCA4/BRG1, SMARCB1/BAF47/SNF5, ACTL6A/BAF53A or ACTL6B/BAF53B, SMARCE1/BAF57, SMARCD1/BAF60A, SMARCD2/BAF60B, perhaps SMARCD3/BAF60C, SMARCC1/BAF155, SMARCC2/BAF170, PBRM1/BAF180, ARID2/BAF200 and actin (ACTB). Interacts with UNKL. Interacts with CEBPE. Post-translationally, ubiquitinated through a signaling process involving RAC1 and the RING finger protein UNKL.

Its subcellular location is the nucleus. Involved in transcriptional activation and repression of select genes by chromatin remodeling (alteration of DNA-nucleosome topology). Component of SWI/SNF chromatin remodeling complexes that carry out key enzymatic activities, changing chromatin structure by altering DNA-histone contacts within a nucleosome in an ATP-dependent manner. Critical regulator of myeloid differentiation, controlling granulocytopoiesis and the expression of genes involved in neutrophil granule formation. The chain is SWI/SNF-related matrix-associated actin-dependent regulator of chromatin subfamily D member 2 (Smarcd2) from Mus musculus (Mouse).